Consider the following 564-residue polypeptide: Homeobox protein unc-62 (564 aa).

5 disordered regions span residues 40–59 (NEQF…ADPA), 216–270 (ERAS…VMGG), 293–313 (SSSS…LHST), 328–397 (PSTC…KVPK), and 455–503 (IDQN…PSSL). The MEIS N-terminal domain maps to 133 to 218 (SSDVCSSASF…PLDIVGDERA (86 aa)). A compositionally biased stretch (low complexity) spans 219–230 (SSSQPPMSPGSM). Polar residues-rich tracts occupy residues 328 to 344 (PSTC…TPLS) and 381 to 390 (LSDSANGSQN). A DNA-binding region (homeobox; TALE-type) is located at residues 392-454 (KRKVPKVFSK…NARRRIVQPM (63 aa)). 2 stretches are compositionally biased toward polar residues: residues 455-469 (IDQN…QMNV) and 494-503 (ANYSPDPSSL).

Belongs to the TALE/MEIS homeobox family. In terms of assembly, forms a heterodimer with homeobox ceh-60.

The protein localises to the nucleus. Its function is as follows. Acts redundantly with ceh-20 and ceh-40 to perform overlapping roles during embryogenesis. Required for postembryonic development of the ectoderm, including the Q, V and P cell lineages, playing a crucial role in ensuring that these cells and their descendants undergo their invariant patterns of cell division, migration, fusion and morphogenesis. Has a role in the mig-13 pathway to promote anterior migration of neuroblasts in the Q lineage. Required for multiple roles in regulating vulva development. Associates with homeobox ceh-60 to regulate gene expression, including repression of genes involved in innate immunity and activation of genes involved in vitellogenesis. Involved in lipid homeostasis, contributing to the formation of the cuticle. The polypeptide is Homeobox protein unc-62 (unc-62) (Caenorhabditis elegans).